The following is a 175-amino-acid chain: MPQYFAIIGKKDNPVYEIEFTNAENPQGFPQDLKELNPFILHASLDIVEDLQWQINPTSQLNGNGGNGSNGGGGFLRSRAVNNTDNCYLGKVDHFYGLAITAYISYSGMKFVMIHGNSANSSVVIDDNNMRSFYQEVHELYVKTLMNPFYKITDPIRSPAFDSRVRTLARKHLSK.

The protein belongs to the TRAPP small subunits family. Sedlin subfamily. As to quaternary structure, part of the multisubunit TRAPP (transport protein particle) I complex composed of BET3, BET5, TRS20, TRS23, TRS31 and TRS33. Part of the multisubunit TRAPP (transport protein particle) II complex composed of BET3, BET5, TRS20, TRS23, TRS31, TRS33, TRS65, TRS85, TRS120 and TRS130. Part of the multisubunit TRAPP (transport protein particle) III complex composed of BET3, BET5, TRS20, TRS23, TRS31, TRS33 and TRS85.

The protein localises to the golgi apparatus. It localises to the cis-Golgi network. The protein resides in the endoplasmic reticulum. It is found in the preautophagosomal structure. In terms of biological role, component of the TRAPP I, TRAPP II and TRAPP III complexes which act as guanine nucleotide exchange factors (GEF) for YPT1. TRAPP I plays a key role in the late stages of endoplasmic reticulum to Golgi traffic. TRAPP II plays a role in intra-Golgi transport. TRAPP III plays a role in autophagosome formation. The protein is Trafficking protein particle complex subunit 20 (TRS20) of Saccharomyces cerevisiae (strain ATCC 204508 / S288c) (Baker's yeast).